The chain runs to 211 residues: Protein-methionine-sulfoxide reductase heme-binding subunit MsrQ (211 aa).

A run of 4 helical transmembrane segments spans residues 17-37 (LAGL…GLGA), 82-102 (LWCF…ELGV), 116-136 (PYLT…FTST), and 153-173 (FVYL…KIIS).

This sequence belongs to the MsrQ family. In terms of assembly, heterodimer of a catalytic subunit (MsrP) and a heme-binding subunit (MsrQ). FMN serves as cofactor. Requires heme b as cofactor.

Its subcellular location is the cell inner membrane. In terms of biological role, part of the MsrPQ system that repairs oxidized periplasmic proteins containing methionine sulfoxide residues (Met-O), using respiratory chain electrons. Thus protects these proteins from oxidative-stress damage caused by reactive species of oxygen and chlorine generated by the host defense mechanisms. MsrPQ is essential for the maintenance of envelope integrity under bleach stress, rescuing a wide series of structurally unrelated periplasmic proteins from methionine oxidation, including the primary periplasmic chaperone SurA and the lipoprotein Pal. MsrQ provides electrons for reduction to the reductase catalytic subunit MsrP, using the quinone pool of the respiratory chain. This chain is Protein-methionine-sulfoxide reductase heme-binding subunit MsrQ, found in Shigella sonnei (strain Ss046).